Consider the following 455-residue polypeptide: MKNSERFSAAKPLMEQGGKSSRKPGFMSEDRISELPEVLLLQILSSLPTKLVISTSVLSKRWLSLWKMVQRLEFESSRNIYDFAENVTRSLLSHKAPVLESLHLKVGDQFDGVYVGVWATIAFTRHVREFVLDLSSYHGPRVRFPTSLFCFDTLETLKLDYVYIYVPCPVSMKSLRTLHLLSVVYKGDESGHNLFASCPNLEHLVLRRGFFFDAVVNFIIDAPSLKTLLLSDPFSARESSRGYVIKAPSLKYLGIESVEGFEYFLIENVTELVEANIRNVSKIVNENILGSLKSAKRLSLDLSPLKITYPTEVMYHQLVYLEMHTHKVEWWNLLTHMLDSSPKLQVLKLIDRETRHENLEFDKKYKDQGKWNQPKYVPECLETFMWRNCNWGREEEKEVATYILRNARQLKKATFSTDPIEAKRLCKLAKRRKMREELDGVVMTSNSCHLVFEFE.

The interval 1–26 is disordered; the sequence is MKNSERFSAAKPLMEQGGKSSRKPGF. Positions 29–75 constitute an F-box domain; the sequence is EDRISELPEVLLLQILSSLPTKLVISTSVLSKRWLSLWKMVQRLEFE. LRR repeat units follow at residues 80-106, 155-182, 183-208, 227-257, 277-302, and 325-351; these read IYDFAENVTRSLLSHKAPVLESLHLKV, ETLKLDYVYIYVPCPVSMKSLRTLHLLS, VVYKGDESGHNLFASCPNLEHLVLRR, TLLLSDPFSARESSRGYVIKAPSLKYLGIES, IRNVSKIVNENILGSLKSAKRLSLDL, and THKVEWWNLLTHMLDSSPKLQVLKLID. The FBD domain maps to 370–417; it reads KWNQPKYVPECLETFMWRNCNWGREEEKEVATYILRNARQLKKATFST.

This is F-box/FBD/LRR-repeat protein At3g51530 from Arabidopsis thaliana (Mouse-ear cress).